The sequence spans 283 residues: Pantothenate synthetase (283 aa).

30 to 37 (MGNLHAGH) is an ATP binding site. His37 serves as the catalytic Proton donor. Gln61 contributes to the (R)-pantoate binding site. Gln61 lines the beta-alanine pocket. 149–152 (GQKD) is an ATP binding site. Gln155 lines the (R)-pantoate pocket. ATP is bound by residues Val178 and 186–189 (LSSR).

Belongs to the pantothenate synthetase family. As to quaternary structure, homodimer.

The protein localises to the cytoplasm. The catalysed reaction is (R)-pantoate + beta-alanine + ATP = (R)-pantothenate + AMP + diphosphate + H(+). It participates in cofactor biosynthesis; (R)-pantothenate biosynthesis; (R)-pantothenate from (R)-pantoate and beta-alanine: step 1/1. Catalyzes the condensation of pantoate with beta-alanine in an ATP-dependent reaction via a pantoyl-adenylate intermediate. This is Pantothenate synthetase from Hydrogenovibrio crunogenus (strain DSM 25203 / XCL-2) (Thiomicrospira crunogena).